We begin with the raw amino-acid sequence, 554 residues long: Protein SINE2 (554 aa).

Residues Asp-17–Ala-290 form an ARMADILLO-type fold region. 3 disordered regions span residues Cys-306–Arg-332, Asn-411–Arg-442, and Glu-465–Asp-487. Low complexity predominate over residues Ser-311–Ser-321. Positions Leu-322–Arg-332 are enriched in basic and acidic residues. Residues Asn-419 to Arg-431 show a composition bias toward basic residues. Over residues Glu-465–Thr-485 the composition is skewed to low complexity. Residues Leu-509–Thr-554 form the KASH domain. A helical membrane pass occupies residues Leu-522–Leu-542. The Required for nuclear localization signature appears at Leu-551 to Thr-554.

Interacts with SUN1 and SUN2. In terms of tissue distribution, expressed in epidermal cells, mesophyll cells, trichomes and root cells.

The protein localises to the nucleus membrane. Its function is as follows. Plays a role in innate immunity against the oomycete pathogen A.arabidopsidis (Hpa). This is Protein SINE2 from Arabidopsis thaliana (Mouse-ear cress).